Consider the following 197-residue polypeptide: Peptide deformylase (197 aa).

The Fe cation site is built by C106 and H148. E149 is a catalytic residue. H152 provides a ligand contact to Fe cation.

Belongs to the polypeptide deformylase family. The cofactor is Fe(2+).

It carries out the reaction N-terminal N-formyl-L-methionyl-[peptide] + H2O = N-terminal L-methionyl-[peptide] + formate. Functionally, removes the formyl group from the N-terminal Met of newly synthesized proteins. Requires at least a dipeptide for an efficient rate of reaction. N-terminal L-methionine is a prerequisite for activity but the enzyme has broad specificity at other positions. The polypeptide is Peptide deformylase (Mycobacterium sp. (strain JLS)).